The primary structure comprises 376 residues: DnaJ homolog subfamily B member 12 (376 aa).

An N-acetylmethionine modification is found at M1. Residues 45-97 (ALIESLNQKPQSTGDHPQPTDTTHTTTKKAGGTETPSANGEAGGGESAKGYTS) are disordered. The segment covering 57–84 (TGDHPQPTDTTHTTTKKAGGTETPSANG) has biased composition (low complexity). Positions 111-175 (DYYEILGVSR…EKRKQYDQFG (65 aa)) constitute a J domain. H186 is modified (pros-methylhistidine). A helical transmembrane segment spans residues 243 to 263 (GGLGVFVQLMPILILILVSAL).

The protein belongs to the DnaJ family. DNAJB12/DNAJB14 subfamily. Homodimer and homotetramer. Interacts (via J domain) with HSPA8/Hsc70. Forms a multiprotein complex, at least composed of DNAJB12, DNAJB14, HSPA8/Hsc70 and SGTA; interaction with DNAJB14 and HSPA8/Hsc70 is direct. In terms of processing, methylated at His-186 by METTL9.

The protein resides in the endoplasmic reticulum membrane. The protein localises to the nucleus membrane. Its function is as follows. Acts as a co-chaperone with HSPA8/Hsc70; required to promote protein folding and trafficking, prevent aggregation of client proteins, and promote unfolded proteins to endoplasmic reticulum-associated degradation (ERAD) pathway. Acts by determining HSPA8/Hsc70's ATPase and polypeptide-binding activities. Can also act independently of HSPA8/Hsc70: together with DNAJB14, acts as a chaperone that promotes maturation of potassium channels KCND2 and KCNH2 by stabilizing nascent channel subunits and assembling them into tetramers. While stabilization of nascent channel proteins is dependent on HSPA8/Hsc70, the process of oligomerization of channel subunits is independent of HSPA8/Hsc70. When overexpressed, forms membranous structures together with DNAJB14 and HSPA8/Hsc70 within the nucleus; the role of these structures, named DJANGOs, is still unclear. The chain is DnaJ homolog subfamily B member 12 from Mus musculus (Mouse).